The sequence spans 2372 residues: MDSYLGRDTISFPLSKELEAEWTDNGEVLLRSHLLKACWALLLGRLSETHTITFAVLEQLVAPPRDACSKLVASSPHLETWQISDRPDSLLVDAAKETHREPLSGTQTSTAVVIRWHDELNGPTSLPYAFNAIVVLDCSISPAKVYMEYSRASLTVNQAWSQLTATVHILEQLVMSPGISLRELDFLGSYSTKLILQWNNPYSLARPQVCIHTLILEHCRSQPDAEALCAWDGSVTYAELDRFSLAVAHQLLSLGVGPESVVPLYFEKSRWTVVAMLGVLRAGGAFVLLDPSHPMPRLAEICSEVQATVVITSESLQELGRKLGPRAVTILDTINSHVDTGRNAFNTSVKPSNAAYVAFTSGSTGKPKGIVIEHQCFVANTLAQNAVQNINSQTRAFQFASYGFDSSILETLMTLVAGGCVCIPSEKQRLNGLADAIRGMRANWLELTPSVARFINPEEVPDVSSVLLVGEPMSQDHITQWSGSGKIQLLNAYGPAECSVVATVQPNVQLEDPQNIGCSYSSHCWITNPQDHDQLEPLGAVGELLISGPIVARGYLNQPHQKSFISNPRWATRFGIPPGERVYKTGDLVRYNLDDGALRYVGRKDREVKIHGQRVDLHEIEHHASRFQKGMLAVADVLQVNGGSAGKLLALFIVADNDETRMTKESFVVPMNDTLLDLVTSIKHWLRDCLPPYMIPTKYTFVNRFPLTRTGKLDRRALVDLGAASSHSSTREQPSNQRDKEDVELDPGLSAKENTLCSVFAEALGCLAINIGPEDGFYDMGGNSLAAIELVARARNHGLEITVADVIRLQNPRKIARCTAESKDVREISPFSLLVDTEQSLSAATAQCGIGREMIEDIYPCTPLQEGLMHLSITNPGAFMGTYRFSLAPSTDLYRVWAAWEQLWLVHPILRTRIIQLQDGQKLQVVTKQKLPFEDISGMDNCQPMNLGTPLARVTYHRGRGSSGSDSGIFLLTMHHALFDGWSYLQMLGDLQVIYAGDKLSPRPSFKHAINYISKLSIEEGRSFWSQELKDFQATMFPTSSRRPTTSPHWQVRSQQIILAESDMNWTLANKIKLAWTLVISSQTHSNDVVYGLTVSGRNAPVPEIDRIVGPTFATFPFRTQLEDDISVEDMLVQMRQHDVSIMPFEHVGLRRIAESSSDAALACGFQNLLTIRLQSLQMPPGALIELPENENHDLKFASYALSIVAQQEGTSLGVKAIFNSCILGADRTEALLEQFDTLLQRILREPGTKMKDLRTQLSPEWQQLAAINKKSPSHLRCLHDIINHFSITQPNSEAVCAWDGSLTYSELVALARRLAGLLQSFGSGSEPGAVIGICVERSKWFPVAILGVMMSGAAMVLLEPNFPTQRLRHILRDAGARTMICSTVFQEKCAGLVDDMLVLTHDIVTQADYDAWTPSAVSHHDPMYVAFTSGSTGAPKGVVIEHGMVYSMLKAHKDIIGASIASRGLLFASPAFDICLAEIVLILCSGGCVCVPSEAQRMNSLAKTMTTMQVNMAMLTPSVARTLAPAAIPCLQTLILGGEAPSASDLETWASRVKLHQSYGPAECAMYTTTTHPLTSSSDLGNVGSSQNASCWIVDPDNHDELQPVGSIGELLIGGPIVGRGYINRAQESAAAFICDPVWSENFPFLQGARLYKTGDLAILNADGSLNLVGRKDTQVKLNGQRIELHEIEHCAERYQHGTAVIAELIKPVGIQRPRLIMFVYDPATVETTVGIDSTCHDHRGLFLPPSRQNQAYLEGVRDHLNQHLPPYMIPSHFLSLSRLPLSPSGKADRKTLRQVASKMDRETLEMYLDNPVAEKRKPTTEQERFVRASFATALSLNEEAIGMDDSFFALGGDSITAMRVLTLCRRRNMAISMQEFLSKNTVTLFCKHVILIQGQAVDSKRQKLLDSQDLVRGEDHLVQFQHLDYQLDMVRSQLNLLKSDSIQEIYPCSDAHSGVLELYTSNYTSTAIFEIRATGSVTPMQVSNAWSQLVHRHVALRTVLMKEPKVHADYLHVVLDKGPAQILALPRSKNALSELKGLEPVKSWGLSPPHRLIIGHDHSGTLFMRLETGYALIDAFSMTILLEELSLLLQGQPLPERGVSYREYLSNLRSQSSAETLQYWTQVLYGVYPSHLPRVPVTQSPLPEPRSQSRCLPFAQSKRLDSFWRSNNLTITNVFQLAWALTLAHYTNSRDVCFGTITSGRDIPHLEVWNIVGSFFNVLPCRIAIEPTRTVIDTLRQNQEDIQRRNDHQYCSIPDMIRKSGIRSLDNNQQLFNTVLTVQNPFSIQSSTAKDGSNEIDVKLIDLEDATEYDLCVAILPSPSHLKVELRYWSTTVSEGYASDILDRLFSQLEQIVHHATKPDFVQVYECTKH.

An adenylation 1 region spans residues 217-610 (EHCRSQPDAE…VGRKDREVKI (394 aa)). Residues 723–745 (AASSHSSTREQPSNQRDKEDVEL) form a disordered region. Positions 725–736 (SSHSSTREQPSN) are enriched in polar residues. Residues 750 to 823 (SAKENTLCSV…KIARCTAESK (74 aa)) enclose the Carrier 1 domain. Position 784 is an O-(pantetheine 4'-phosphoryl)serine (serine 784). The tract at residues 856–1122 (EDIYPCTPLQ…FATFPFRTQL (267 aa)) is condensation 1. The tract at residues 1290–1679 (QPNSEAVCAW…VGRKDTQVKL (390 aa)) is adenylation 2. The Carrier 2 domain occupies 1819 to 1895 (KPTTEQERFV…LFCKHVILIQ (77 aa)). Serine 1856 is subject to O-(pantetheine 4'-phosphoryl)serine. The tract at residues 1962 to 2227 (TSNYTSTAIF…FNVLPCRIAI (266 aa)) is condensation 2.

It participates in alkaloid biosynthesis. Dipeptide synthase; part of the gene cluster that mediates the biosynthesis of the mycotoxins roquefortine C and meleagrin. The first stage is catalyzed by the dipeptide synthase roqA which condenses histidine and tryptophan to produce histidyltryptophanyldiketopiperazine (HTD). HTD is then converted to roquefortine C through two possible pathways. In the first pathway, prenyltransferase roqD transforms HTD to the intermediate roquefortine D, which is in turn converted to roquefortine C by the cytochrome P450 monooxygenase roqR. In the second pathway, HTD is first converted to the intermediate dehydrohistidyltryptophanyldi-ketopiperazine (DHTD) by roqR which is then prenylated by roqD to form roquefortine C. Roquefortine C can be further transformed to meleagrin via three more reactions including oxydation to glandicolin A by roqM, which is further reduced to glandicoline B by roqO. Finally, glandicoline B is converted to meleagrin by the glandicoline B O-methyltransferase roqN. More studies identified further branching and additional metabolites produced by the roquefortine/meleagrin cluster, including roquefortine F, roquefortine L, roquefortine M, roquefortine N and neoxaline. This chain is Nonribosomal peptide synthase roqA, found in Penicillium rubens (strain ATCC 28089 / DSM 1075 / NRRL 1951 / Wisconsin 54-1255) (Penicillium chrysogenum).